A 467-amino-acid chain; its full sequence is Immunoglobulin superfamily member 21 (467 aa).

The signal sequence occupies residues methionine 1–glycine 24. The region spanning tyrosine 25–alanine 132 is the Ig-like 1 domain. A disulfide bridge links cysteine 46 with cysteine 116. Asparagine 82 and asparagine 165 each carry an N-linked (GlcNAc...) asparagine glycan. Residues leucine 229–glutamine 259 form a disordered region. A compositionally biased stretch (basic and acidic residues) spans alanine 234–serine 247. Residues proline 344–isoleucine 429 enclose the Ig-like 2 domain. N-linked (GlcNAc...) asparagine glycans are attached at residues asparagine 407 and asparagine 444.

In terms of assembly, interacts (Ig-like 1 domain) with NRXN2 (via Laminin G-like 1 domain) in a trans-interaction manner.

The protein resides in the postsynaptic cell membrane. Its function is as follows. Involved in synaptic inhibition in the brain. Selectively regulates inhibitory presynaptic differentiation through interacting with presynaptic NRXN2. In Homo sapiens (Human), this protein is Immunoglobulin superfamily member 21.